Here is a 349-residue protein sequence, read N- to C-terminus: Fructose-bisphosphate aldolase 2, chloroplastic (349 aa).

The substrate site is built by R47 and K137. E177 (proton acceptor) is an active-site residue. K219 acts as the Schiff-base intermediate with dihydroxyacetone-P in catalysis.

This sequence belongs to the class I fructose-bisphosphate aldolase family.

The protein resides in the plastid. The protein localises to the chloroplast. It catalyses the reaction beta-D-fructose 1,6-bisphosphate = D-glyceraldehyde 3-phosphate + dihydroxyacetone phosphate. The protein operates within carbohydrate degradation; glycolysis; D-glyceraldehyde 3-phosphate and glycerone phosphate from D-glucose: step 4/4. The sequence is that of Fructose-bisphosphate aldolase 2, chloroplastic from Pisum sativum (Garden pea).